Consider the following 828-residue polypeptide: Periplasmic nitrate reductase (828 aa).

The segment at residues 1–31 is a signal peptide (tat-type signal); that stretch reads MKLSRRSFMKANAVAAAAAAAGLSVPGVARA. Residues 39-95 enclose the 4Fe-4S Mo/W bis-MGD-type domain; it reads IKWDKAPCRFCGTGCGVLVGTQQGRVVACQGDPDAPVNRGLNCIKGYFLPKIMYGKD. C46, C49, C53, and C81 together coordinate [4Fe-4S] cluster. Residues K83, Q150, N175, C179, 212-219, 243-247, 262-264, M372, Q376, N482, 508-509, K531, D558, and 718-727 contribute to the Mo-bis(molybdopterin guanine dinucleotide) site; these read WGANMAEM, STYQH, QSD, SD, and TGRVLEHWHT. A substrate-binding site is contributed by F794. N802 and K819 together coordinate Mo-bis(molybdopterin guanine dinucleotide).

The protein belongs to the prokaryotic molybdopterin-containing oxidoreductase family. NasA/NapA/NarB subfamily. In terms of assembly, component of the periplasmic nitrate reductase NapAB complex composed of NapA and NapB. [4Fe-4S] cluster is required as a cofactor. Requires Mo-bis(molybdopterin guanine dinucleotide) as cofactor. In terms of processing, predicted to be exported by the Tat system. The position of the signal peptide cleavage has not been experimentally proven.

Its subcellular location is the periplasm. The catalysed reaction is 2 Fe(II)-[cytochrome] + nitrate + 2 H(+) = 2 Fe(III)-[cytochrome] + nitrite + H2O. Catalytic subunit of the periplasmic nitrate reductase complex NapAB. Receives electrons from NapB and catalyzes the reduction of nitrate to nitrite. The chain is Periplasmic nitrate reductase from Escherichia coli O157:H7 (strain EC4115 / EHEC).